The primary structure comprises 348 residues: MTYNIVALPGDGIGPEILNGSLSLLEIISNKYNFNYQIEHHEFGGASIDTFGEPLTEKTLNACKRADAILLGAIGGPKWTDPNNRPEQGLLKLRKSLNLFVNIRPTTVVKGASSLSPLKEERVEGTDLVIVRELTSGIYFGEPRHFNNHEALDSLTYTREEIERIVHVAFKLAASRRGKLTSVDKENVLASSKLWRKVVNEVSQLYPEVTVNHLFVDACSMHLITNPKQFDVIVCENLFGDILSDEASVIPGSLGLSPSASFSNDGPRLYEPIHGSAPDIAGKNVANPFGMILSLAMCLRESLNQPDAADELEQHIYSMIEHGQTTADLGGKLNTTDIFEILSQKLNH.

76 to 87 contributes to the NAD(+) binding site; that stretch reads GPKWTDPNNRPE. The substrate site is built by R94, R104, R132, and D217. Residues D217, D241, and D245 each coordinate Mg(2+). 275 to 287 is an NAD(+) binding site; sequence GSAPDIAGKNVAN.

This sequence belongs to the isocitrate and isopropylmalate dehydrogenases family. LeuB type 1 subfamily. As to quaternary structure, homodimer. Requires Mg(2+) as cofactor. It depends on Mn(2+) as a cofactor.

It is found in the cytoplasm. It catalyses the reaction (2R,3S)-3-isopropylmalate + NAD(+) = 4-methyl-2-oxopentanoate + CO2 + NADH. It functions in the pathway amino-acid biosynthesis; L-leucine biosynthesis; L-leucine from 3-methyl-2-oxobutanoate: step 3/4. Catalyzes the oxidation of 3-carboxy-2-hydroxy-4-methylpentanoate (3-isopropylmalate) to 3-carboxy-4-methyl-2-oxopentanoate. The product decarboxylates to 4-methyl-2 oxopentanoate. The polypeptide is 3-isopropylmalate dehydrogenase (Staphylococcus aureus (strain NCTC 8325 / PS 47)).